Here is a 265-residue protein sequence, read N- to C-terminus: DNA repair protein RecO (265 aa).

This sequence belongs to the RecO family.

In terms of biological role, involved in DNA repair and RecF pathway recombination. In Mycobacterium marinum (strain ATCC BAA-535 / M), this protein is DNA repair protein RecO.